The following is a 308-amino-acid chain: tRNA dimethylallyltransferase (308 aa).

14 to 21 contacts ATP; that stretch reads GPTASGKT. Residue 16–21 coordinates substrate; that stretch reads TASGKT. Interaction with substrate tRNA stretches follow at residues 39–42, 163–167, and 244–249; these read DSAL, QRLAR, and RCVGYR.

Belongs to the IPP transferase family. Monomer. The cofactor is Mg(2+).

The catalysed reaction is adenosine(37) in tRNA + dimethylallyl diphosphate = N(6)-dimethylallyladenosine(37) in tRNA + diphosphate. Its function is as follows. Catalyzes the transfer of a dimethylallyl group onto the adenine at position 37 in tRNAs that read codons beginning with uridine, leading to the formation of N6-(dimethylallyl)adenosine (i(6)A). This Shewanella piezotolerans (strain WP3 / JCM 13877) protein is tRNA dimethylallyltransferase.